Reading from the N-terminus, the 469-residue chain is ATP synthase subunit beta (469 aa).

155–162 (GGAGVGKT) provides a ligand contact to ATP.

The protein belongs to the ATPase alpha/beta chains family. F-type ATPases have 2 components, CF(1) - the catalytic core - and CF(0) - the membrane proton channel. CF(1) has five subunits: alpha(3), beta(3), gamma(1), delta(1), epsilon(1). CF(0) has three main subunits: a(1), b(2) and c(9-12). The alpha and beta chains form an alternating ring which encloses part of the gamma chain. CF(1) is attached to CF(0) by a central stalk formed by the gamma and epsilon chains, while a peripheral stalk is formed by the delta and b chains.

It is found in the cell inner membrane. It carries out the reaction ATP + H2O + 4 H(+)(in) = ADP + phosphate + 5 H(+)(out). Produces ATP from ADP in the presence of a proton gradient across the membrane. The catalytic sites are hosted primarily by the beta subunits. The chain is ATP synthase subunit beta from Thermosipho melanesiensis (strain DSM 12029 / CIP 104789 / BI429).